The chain runs to 365 residues: NADH-quinone oxidoreductase subunit 8 (365 aa).

Transmembrane regions (helical) follow at residues 11-31, 80-100, 120-140, 157-177, 192-212, 252-272, 273-293, 310-330, and 336-356; these read WMVALKALLVVVGLLTAFAFM, FLFVLAPLISVVFALLAFGLI, LGILYLFAVSELAVYGIFLSG, ASLISYELGLGLALLAPVLLV, HGWLFLYAFPAFLVYLIASMA, FITASALIPTLFLGGWTMPVL, EVPYLWMFLKIAFFLFFFIWI, WGFLFPLALLWFLVTALVVAL, and YLLYLSALSFLVLLGAVLYTP.

This sequence belongs to the complex I subunit 1 family. As to quaternary structure, NDH-1 is composed of 15 different subunits, Nqo1 to Nqo15. The complex has a L-shaped structure, with the hydrophobic arm (subunits Nqo7, Nqo8 and Nqo10 to Nqo14) embedded in the membrane and the hydrophilic peripheral arm (subunits Nqo1 to Nqo6, Nqo9 and Nqo15) protruding into the bacterial cytoplasm. The hydrophilic domain contains all the redox centers.

Its subcellular location is the cell inner membrane. It carries out the reaction a quinone + NADH + 5 H(+)(in) = a quinol + NAD(+) + 4 H(+)(out). Functionally, NDH-1 shuttles electrons from NADH, via FMN and iron-sulfur (Fe-S) centers, to quinones in the respiratory chain. The immediate electron acceptor for the enzyme in this species is menaquinone. Couples the redox reaction to proton translocation (for every two electrons transferred, four hydrogen ions are translocated across the cytoplasmic membrane), and thus conserves the redox energy in a proton gradient required for the synthesis of ATP. The sequence is that of NADH-quinone oxidoreductase subunit 8 (nqo8) from Thermus thermophilus (strain ATCC 27634 / DSM 579 / HB8).